The primary structure comprises 312 residues: MTKIIFMGTPAFSVPVLEQLASAYDVIAVVTQPDRPVGRKRILTPPPVKKAALELGIPVYQPEKLRTSSELEELISLEADLLVTAAYGQILPNTLLESPKHGAINVHASLLPEYRGGAPVHYALLDGKTETGVTIMYMVEKLDAGDMISQRKIPITEEDNTGTMFDKLSKLGAELLMDTLPDFLAGKITAVAQDPEKVTFARNISREQEKINWTKPGRTIFNQIRGLSPWPVAYTTLEEKPFKIWEATFEDTKTSGEPGTILTDKSTLKIVAGDGTLIVPTVIQPAGKPKMDIHSFMSGAGRNLSKTTRFGE.

(6S)-5,6,7,8-tetrahydrofolate is bound at residue 109 to 112; it reads SLLP.

The protein belongs to the Fmt family.

It carries out the reaction L-methionyl-tRNA(fMet) + (6R)-10-formyltetrahydrofolate = N-formyl-L-methionyl-tRNA(fMet) + (6S)-5,6,7,8-tetrahydrofolate + H(+). Its function is as follows. Attaches a formyl group to the free amino group of methionyl-tRNA(fMet). The formyl group appears to play a dual role in the initiator identity of N-formylmethionyl-tRNA by promoting its recognition by IF2 and preventing the misappropriation of this tRNA by the elongation apparatus. This is Methionyl-tRNA formyltransferase from Listeria innocua serovar 6a (strain ATCC BAA-680 / CLIP 11262).